A 629-amino-acid polypeptide reads, in one-letter code: Ionotropic receptor 75a (629 aa).

The Extracellular segment spans residues 1-335; the sequence is MQLVQLANFV…GDVFLQPFSP (335 aa). 6 N-linked (GlcNAc...) asparagine glycosylation sites follow: asparagine 61, asparagine 112, asparagine 126, asparagine 144, asparagine 166, and asparagine 232. Residues 336–356 traverse the membrane as a helical segment; the sequence is LVWYLFGGVLSLIGVLLWITF. Residues 357–374 lie on the Cytoplasmic side of the membrane; that stretch reads YMECKRMQKRWRLDYLPS. The chain crosses the membrane as a helical span at residues 375 to 395; it reads LLSTFLISFGAACIQSSSLIP. The Extracellular segment spans residues 396 to 402; sequence RSAGGRL. Residues 403-423 traverse the membrane as a helical segment; that stretch reads IYFALFLISFIMYNYYTSVVV. Residues 424-592 are Cytoplasmic-facing; that stretch reads SSLLSSPVKS…NFVITVGMEY (169 aa). Residues 593–613 form a helical membrane-spanning segment; it reads VAPLLLMLICADILVVVILLV. Topologically, residues 614 to 629 are extracellular; it reads ELAWKRFFTRPLTIHP.

This sequence belongs to the glutamate-gated ion channel (TC 1.A.10.1) family. As to expression, expressed in neurons in the antennal coeloconic 2 (ac2) sensillum class of sensory hairs (at protein level).

Its subcellular location is the cell membrane. It is found in the cell projection. It localises to the dendrite. Olfactory receptor for propionic, butyric and 2-oxopentanoic acids. The chain is Ionotropic receptor 75a from Drosophila sechellia (Fruit fly).